A 101-amino-acid chain; its full sequence is Multivesicular body sorting factor 12 (101 aa).

Residue Met1 is modified to N-acetylmethionine. Residue Ser94 is modified to Phosphoserine.

As to quaternary structure, component of the ESCRT-I complex (endosomal sorting complex required for transport I) which consists of STP22, VPS28, SRN2 and MVB12 in a 1:1:1:1 stoichiometry. Interacts with STP22 and SRN2.

It is found in the cytoplasm. It localises to the endosome. Its subcellular location is the late endosome membrane. Functionally, component of the ESCRT-I complex, a regulator of vesicular trafficking process. Binds to ubiquitinated cargo proteins and is required for the sorting of endocytic ubiquitinated cargos into multivesicular bodies (MVBs). Appears to be involved in cargo sorting and release of the ESCRT-I complex from the MVBs. The sequence is that of Multivesicular body sorting factor 12 (MVB12) from Saccharomyces cerevisiae (strain ATCC 204508 / S288c) (Baker's yeast).